A 310-amino-acid polypeptide reads, in one-letter code: Methionyl-tRNA formyltransferase (310 aa).

Residue Ser-109–Pro-112 coordinates (6S)-5,6,7,8-tetrahydrofolate.

It belongs to the Fmt family.

The enzyme catalyses L-methionyl-tRNA(fMet) + (6R)-10-formyltetrahydrofolate = N-formyl-L-methionyl-tRNA(fMet) + (6S)-5,6,7,8-tetrahydrofolate + H(+). Attaches a formyl group to the free amino group of methionyl-tRNA(fMet). The formyl group appears to play a dual role in the initiator identity of N-formylmethionyl-tRNA by promoting its recognition by IF2 and preventing the misappropriation of this tRNA by the elongation apparatus. This is Methionyl-tRNA formyltransferase from Pseudomonas putida (strain W619).